A 167-amino-acid chain; its full sequence is Bacterial non-heme ferritin (167 aa).

The Ferritin-like diiron domain maps to 1-145 (MLSKDIIKLL…DILDKIELIG (145 aa)). 5 residues coordinate Fe cation: E17, E50, H53, E94, and Q127.

The protein belongs to the ferritin family. Prokaryotic subfamily. In terms of assembly, homooligomer of 24 subunits that assemble into a spherical protein shell (12 +/- 1 nM diameter) that can sequester at least 2000 iron atoms.

The protein resides in the cytoplasm. The enzyme catalyses 4 Fe(2+) + O2 + 6 H2O = 4 iron(III) oxide-hydroxide + 12 H(+). Iron-storage protein. This is Bacterial non-heme ferritin (ftnA) from Helicobacter pylori (strain J99 / ATCC 700824) (Campylobacter pylori J99).